A 396-amino-acid polypeptide reads, in one-letter code: Small ribosomal subunit protein uS9m (396 aa).

Lys287 is modified (N6-acetyllysine). The tract at residues 374–396 (PRVRERKKPGQEGARRKFTWKKR) is disordered.

This sequence belongs to the universal ribosomal protein uS9 family. As to quaternary structure, component of the mitochondrial small ribosomal subunit (mt-SSU). Mature mammalian 55S mitochondrial ribosomes consist of a small (28S) and a large (39S) subunit. The 28S small subunit contains a 12S ribosomal RNA (12S mt-rRNA) and 30 different proteins. The 39S large subunit contains a 16S rRNA (16S mt-rRNA), a copy of mitochondrial valine transfer RNA (mt-tRNA(Val)), which plays an integral structural role, and 52 different proteins.

It localises to the mitochondrion. This Homo sapiens (Human) protein is Small ribosomal subunit protein uS9m (MRPS9).